A 344-amino-acid polypeptide reads, in one-letter code: Zinc transporter 9 (344 aa).

The chain crosses the membrane as a helical span at residues 1–21 (MASILISGAAGVSIPLVGTLL). Over 22-30 (PLNGGLMRG) the chain is Cytoplasmic. The helical transmembrane segment at 31-51 (AKAFAAGVILATGFVHMLSGG) threads the bilayer. Topologically, residues 52 to 72 (SKALSDPCLPEFPWKMFPFPE) are extracellular. The chain crosses the membrane as a helical span at residues 73 to 93 (FFAMVAALLTLLADFMITGYY). At 94-188 (ERKQEKMMNQ…DVGLDSGVRH (95 aa)) the chain is on the cytoplasmic side. Residues 189 to 209 (VVVSQILEMGIVSHSIIIGIS) traverse the membrane as a helical segment. Topologically, residues 210–221 (LGVSHSPCTIRP) are extracellular. Residues 222–242 (LLLALSFHQFFEGFALGGCVA) form a helical membrane-spanning segment. Topologically, residues 243-251 (EARLTPRGS) are cytoplasmic. A helical transmembrane segment spans residues 252-272 (AMMAFFFAITTPIGVAVGTAI). The Extracellular portion of the chain corresponds to 273 to 291 (ASSYNSYSVAALVAEGVLD). Residues 292-312 (SLSAGILVYMALVDLIAADFL) traverse the membrane as a helical segment. The Cytoplasmic portion of the chain corresponds to 313–323 (SKKMSVDFRVQ). The helical transmembrane segment at 324 to 344 (VVSYCFLFLGAGMMSALAIWA) threads the bilayer.

It belongs to the ZIP transporter (TC 2.A.5) family.

It localises to the cell membrane. In terms of biological role, zinc transporter involved in zinc uptake in roots. Targeted by BZIP19 transcription factor in response to zinc-deficient conditions. The protein is Zinc transporter 9 (ZIP9) of Arabidopsis thaliana (Mouse-ear cress).